We begin with the raw amino-acid sequence, 120 residues long: NAD(P)H-quinone oxidoreductase subunit 3 (120 aa).

3 helical membrane-spanning segments follow: residues 6–26 (GYDA…LALV), 64–84 (MFAL…PWAV), and 89–109 (LGLL…VALA).

The protein belongs to the complex I subunit 3 family. In terms of assembly, NDH-1 can be composed of about 15 different subunits; different subcomplexes with different compositions have been identified which probably have different functions.

The protein resides in the cellular thylakoid membrane. The catalysed reaction is a plastoquinone + NADH + (n+1) H(+)(in) = a plastoquinol + NAD(+) + n H(+)(out). The enzyme catalyses a plastoquinone + NADPH + (n+1) H(+)(in) = a plastoquinol + NADP(+) + n H(+)(out). Functionally, NDH-1 shuttles electrons from an unknown electron donor, via FMN and iron-sulfur (Fe-S) centers, to quinones in the respiratory and/or the photosynthetic chain. The immediate electron acceptor for the enzyme in this species is believed to be plastoquinone. Couples the redox reaction to proton translocation, and thus conserves the redox energy in a proton gradient. Cyanobacterial NDH-1 also plays a role in inorganic carbon-concentration. This chain is NAD(P)H-quinone oxidoreductase subunit 3, found in Prochlorococcus marinus (strain SARG / CCMP1375 / SS120).